The following is a 368-amino-acid chain: Probable dual-specificity RNA methyltransferase RlmN (368 aa).

Glutamate 100 functions as the Proton acceptor in the catalytic mechanism. A Radical SAM core domain is found at 106-344 (QHYGLSVCVT…CVVRQEHGTD (239 aa)). A disulfide bridge links cysteine 113 with cysteine 349. [4Fe-4S] cluster is bound by residues cysteine 120, cysteine 124, and cysteine 127. S-adenosyl-L-methionine is bound by residues 172–173 (GE), serine 204, 227–229 (SLH), and asparagine 305. Residue cysteine 349 is the S-methylcysteine intermediate of the active site.

The protein belongs to the radical SAM superfamily. RlmN family. [4Fe-4S] cluster is required as a cofactor.

It localises to the cytoplasm. It catalyses the reaction adenosine(2503) in 23S rRNA + 2 reduced [2Fe-2S]-[ferredoxin] + 2 S-adenosyl-L-methionine = 2-methyladenosine(2503) in 23S rRNA + 5'-deoxyadenosine + L-methionine + 2 oxidized [2Fe-2S]-[ferredoxin] + S-adenosyl-L-homocysteine. The catalysed reaction is adenosine(37) in tRNA + 2 reduced [2Fe-2S]-[ferredoxin] + 2 S-adenosyl-L-methionine = 2-methyladenosine(37) in tRNA + 5'-deoxyadenosine + L-methionine + 2 oxidized [2Fe-2S]-[ferredoxin] + S-adenosyl-L-homocysteine. Its function is as follows. Specifically methylates position 2 of adenine 2503 in 23S rRNA and position 2 of adenine 37 in tRNAs. The sequence is that of Probable dual-specificity RNA methyltransferase RlmN from Streptococcus agalactiae serotype V (strain ATCC BAA-611 / 2603 V/R).